The chain runs to 691 residues: Tumor necrosis factor alpha-induced protein 2 (691 aa).

Residues 9 to 111 (QGFPGQQSVP…KPRPELDGPL (103 aa)) form a disordered region. A compositionally biased stretch (polar residues) spans 12–31 (PGQQSVPGTLNFAVSPQKPR). Residues 33 to 45 (TSEAESETSMSEA) are compositionally biased toward low complexity. Residues 91-107 (QPRLSDLEVQPKPRPEL) show a composition bias toward basic and acidic residues.

It belongs to the SEC6 family.

May play a role as a mediator of inflammation and angiogenesis. The sequence is that of Tumor necrosis factor alpha-induced protein 2 (Tnfaip2) from Mus musculus (Mouse).